A 170-amino-acid polypeptide reads, in one-letter code: Tubulin polymerization-promoting protein family member 2 (170 aa).

The segment at 127–170 is disordered; that stretch reads TGTHKERFDESGKGKGIAGREEMTDNTGYVSGYKGSGTYDKKTK. Residues 129-149 are compositionally biased toward basic and acidic residues; the sequence is THKERFDESGKGKGIAGREEM.

The protein belongs to the TPPP family. In terms of tissue distribution, expressed in spermatids. Detected in liver cancer (at protein level).

It localises to the cytoplasm. The protein resides in the cytosol. The protein localises to the cell projection. It is found in the cilium. Its subcellular location is the flagellum. In terms of biological role, probable regulator of microtubule dynamics required for sperm motility. In contrast to other members of the family, has no microtubule bundling activity. The polypeptide is Tubulin polymerization-promoting protein family member 2 (Homo sapiens (Human)).